We begin with the raw amino-acid sequence, 159 residues long: NADH-quinone oxidoreductase subunit I (159 aa).

2 4Fe-4S ferredoxin-type domains span residues Gln50–Glu80 and Lys90–Ile119. Cys60, Cys63, Cys66, Cys70, Cys99, Cys102, Cys105, and Cys109 together coordinate [4Fe-4S] cluster.

Belongs to the complex I 23 kDa subunit family. NDH-1 is composed of 14 different subunits. Subunits NuoA, H, J, K, L, M, N constitute the membrane sector of the complex. It depends on [4Fe-4S] cluster as a cofactor.

The protein localises to the cell inner membrane. It carries out the reaction a quinone + NADH + 5 H(+)(in) = a quinol + NAD(+) + 4 H(+)(out). In terms of biological role, NDH-1 shuttles electrons from NADH, via FMN and iron-sulfur (Fe-S) centers, to quinones in the respiratory chain. The immediate electron acceptor for the enzyme in this species is believed to be ubiquinone. Couples the redox reaction to proton translocation (for every two electrons transferred, four hydrogen ions are translocated across the cytoplasmic membrane), and thus conserves the redox energy in a proton gradient. This chain is NADH-quinone oxidoreductase subunit I, found in Neisseria meningitidis serogroup A / serotype 4A (strain DSM 15465 / Z2491).